The sequence spans 258 residues: MILTLDVGNTQIFGGVYEGDNLKLTFRKTSKGTLTSDELGLFLRQVLRENGLDPKKIREVGVSSVVPDINRTIHNSCMKYLGLEPFMIGPGIKTGLNIRGRDAANLGADRVADAIAAMNIYPDRNLLIIDFGTANTYDAISKNKEYKGGAIQIGVSTSLNALIQNAALLSKVEILDPGGAASLTTEGQIQAGLYYGNLGAIKEFITRIKKECFGNEESIVIGTGGMGRLFESAKVFDVYLPDLVILGIKIALEQNRSV.

6–13 (DVGNTQIF) is an ATP binding site. 107–110 (GADR) lines the substrate pocket. The active-site Proton acceptor is the Asp-109. A K(+)-binding site is contributed by Asp-130. ATP is bound at residue Thr-133. Thr-185 serves as a coordination point for substrate.

It belongs to the type III pantothenate kinase family. Homodimer. Requires NH4(+) as cofactor. K(+) serves as cofactor.

The protein resides in the cytoplasm. It catalyses the reaction (R)-pantothenate + ATP = (R)-4'-phosphopantothenate + ADP + H(+). It functions in the pathway cofactor biosynthesis; coenzyme A biosynthesis; CoA from (R)-pantothenate: step 1/5. Functionally, catalyzes the phosphorylation of pantothenate (Pan), the first step in CoA biosynthesis. In Elusimicrobium minutum (strain Pei191), this protein is Type III pantothenate kinase.